Reading from the N-terminus, the 812-residue chain is MAGTVVLDDVELREAQRDYLDFLDDEEDQGIYQNKVRELISDNQYRLIVSVNDLRRKNEKRANRLLNNAFEELVAFQRALKDFVASIDATYAKQYEEFYIGLEGSFGSKHVSPRTLTSCFLSCVVCVEGIVTKCSLVRPKVVRSVHYCPATKKTIERRYSDLTTLVAFPSSSVYPTKDEENNPLETEYGLSVYKDHQTITIQEMPEKAPAGQLPRSVDVILDDDLVDKVKPGDRIQVVGTYRCLPGKKGCYTSGTFRTVLIACNVKQMSKDIQPAFSADDIAKIKKFSKTRSKDVFEQLARSLAPSIHGHDYVKKAILCLLLGGVERELENGSHIRGDINILLIGDPSVAKSQLLRYVLCTAPRAIPTTGRGSSGVGLTAAVTTDQETGERRLEAGAMVLADRGVVCIDEFDKMSDMDRTAIHEVMEQGRVTIAKAGIHARLNARCSVLAAANPVYGRYDQYKTPMENIGLQDSLLSRFDLLFIMLDQMDPEQDREISDHVLRMHQYRAPGEQDGDALPLGSSVDILATDDPDFTQDDQQDTRIYEKHDSLLHGTKKKKEKMVSAAFMKKYIHVAKIIKPTLTQESAAYIAEEYSRLRSQDSMSSDTARTSPVTARTLETLIRLATAHAKARMSKTVDLQDAEEAVELVQYAYFKKVLEKEKKRKKASEDESDLEDEEEKSQEDTEQKRKRRKTHAKDGESYDPYDFSEAETQMPQVHTPKTDDSQEKTDDSQETQDSQKVELSEPRLKAFKAALLEVFQEAHEQSVGMLHLTESINRNREEPFSSEEIQACLSRMQDDNQVMVSEGIVFLI.

A2 is modified (N-acetylalanine). A Phosphoserine modification is found at S160. N6-acetyllysine is present on K293. Residues 295 to 502 (VFEQLARSLA…QDREISDHVL (208 aa)) enclose the MCM domain. ADP contacts are provided by Q353, L393, E394, A395, and A397. An Arginine finger motif is present at residues 477-480 (SRFD). An N6-acetyllysine modification is found at K547. S611 carries the post-translational modification Phosphoserine. Residue R664 coordinates ATP. A disordered region spans residues 664–744 (RKKASEDESD…TQDSQKVELS (81 aa)). Phosphoserine occurs at positions 668, 672, and 681. A compositionally biased stretch (acidic residues) spans 670–681 (DESDLEDEEEKS). The residue at position 705 (Y705) is a Phosphotyrosine. S708 carries the post-translational modification Phosphoserine. A phosphothreonine mark is found at T719, T722, and T729. The span at 720–744 (PKTDDSQEKTDDSQETQDSQKVELS) shows a compositional bias: basic and acidic residues. Phosphoserine is present on residues S732 and S738.

Belongs to the MCM family. In terms of assembly, component of the MCM2-7 complex. The complex forms a toroidal hexameric ring with the proposed subunit order MCM2-MCM6-MCM4-MCM7-MCM3-MCM5. Component of the CMG helicase complex, a hexameric ring of related MCM2-7 subunits stabilized by CDC45 and the tetrameric GINS complex. Associated with the replication-specific DNA polymerase alpha. Interacts with MCMBP. Interacts with ANKRD17. Interacts with MCM3AP; this interaction leads to MCM3 acetylation. Acetylated by MCM3AP. Post-translationally, O-glycosylated (O-GlcNAcylated), in a cell cycle-dependent manner.

It is found in the nucleus. The protein localises to the chromosome. It catalyses the reaction ATP + H2O = ADP + phosphate + H(+). Functionally, acts as a component of the MCM2-7 complex (MCM complex) which is the replicative helicase essential for 'once per cell cycle' DNA replication initiation and elongation in eukaryotic cells. Core component of CDC45-MCM-GINS (CMG) helicase, the molecular machine that unwinds template DNA during replication, and around which the replisome is built. The active ATPase sites in the MCM2-7 ring are formed through the interaction surfaces of two neighboring subunits such that a critical structure of a conserved arginine finger motif is provided in trans relative to the ATP-binding site of the Walker A box of the adjacent subunit. The six ATPase active sites, however, are likely to contribute differentially to the complex helicase activity. Required for the entry in S phase and for cell division. This chain is DNA replication licensing factor MCM3 (Mcm3), found in Mus musculus (Mouse).